The primary structure comprises 141 residues: Eukaryotic translation initiation factor 1A (141 aa).

The segment covering 1 to 15 (MPKNKGKGGKNRRRG) has biased composition (basic residues). Residues 1–28 (MPKNKGKGGKNRRRGKNENEQKRELQFK) are disordered. A compositionally biased stretch (basic and acidic residues) spans 16 to 28 (KNENEQKRELQFK). One can recognise an S1-like domain in the interval 21-95 (QKRELQFKEE…DKADVILRYN (75 aa)).

It belongs to the eIF-1A family.

Seems to be required for maximal rate of protein biosynthesis. Enhances ribosome dissociation into subunits and stabilizes the binding of the initiator Met-tRNA(I) to 40 S ribosomal subunits. The sequence is that of Eukaryotic translation initiation factor 1A (eif1a) from Dictyostelium discoideum (Social amoeba).